The following is a 159-amino-acid chain: MSYPITSPSQFVFLSSVWADPIELLNVCTNSLGNQFQTQQARTTVQQQFSEVWEPFPQSTVRFPGDVYKVYRYNAVLDPLITALLGTFDTRNRIIEVENRQSPTTAETLDATRRVDDATVAIRSAINNLVNELVRGTGLYNQNTFESMSGLVWTSAPAS.

This sequence belongs to the virgaviridae capsid protein family.

It is found in the virion. Capsid protein self-assembles to form rod-shaped virions about 18 nm in diameter with a central canal enclosing the viral genomic RNA. The sequence is that of Capsid protein (CP) from Tomato mosaic virus (strain Kazakh K1) (ToMV).